The chain runs to 347 residues: Eukaryotic translation initiation factor 3 subunit I (347 aa).

5 WD repeats span residues 8-47 (GHERPLTQVKYNKEGDLLFSCSKDSSASVWYSLNGERLGT), 50-89 (GHTGTIWSIDVDCFTKYCVTGSADYSIKLWDVSNGQCVAT), 149-190 (THEG…EYVD), 194-233 (LHEKSISDMQFSPDLTYFITSSRDTNSFLVDVSTLQVLKK), and 291-330 (GHFGPLNTVAISPQGTSYASGGEDGFIRLHHFEKSYFDFK). Position 302 is a phosphoserine (serine 302).

This sequence belongs to the eIF-3 subunit I family. Component of the eukaryotic translation initiation factor 3 (eIF-3) complex.

It is found in the cytoplasm. Component of the eukaryotic translation initiation factor 3 (eIF-3) complex, which is involved in protein synthesis of a specialized repertoire of mRNAs and, together with other initiation factors, stimulates binding of mRNA and methionyl-tRNAi to the 40S ribosome. The eIF-3 complex specifically targets and initiates translation of a subset of mRNAs involved in cell proliferation. The protein is Eukaryotic translation initiation factor 3 subunit I of Saccharomyces cerevisiae (strain YJM789) (Baker's yeast).